The primary structure comprises 418 residues: Light-independent protochlorophyllide reductase subunit N (418 aa).

Cys-17, Cys-42, and Cys-103 together coordinate [4Fe-4S] cluster.

This sequence belongs to the BchN/ChlN family. As to quaternary structure, protochlorophyllide reductase is composed of three subunits; ChlL, ChlN and ChlB. Forms a heterotetramer of two ChlB and two ChlN subunits. The cofactor is [4Fe-4S] cluster.

The enzyme catalyses chlorophyllide a + oxidized 2[4Fe-4S]-[ferredoxin] + 2 ADP + 2 phosphate = protochlorophyllide a + reduced 2[4Fe-4S]-[ferredoxin] + 2 ATP + 2 H2O. It functions in the pathway porphyrin-containing compound metabolism; chlorophyll biosynthesis (light-independent). In terms of biological role, component of the dark-operative protochlorophyllide reductase (DPOR) that uses Mg-ATP and reduced ferredoxin to reduce ring D of protochlorophyllide (Pchlide) to form chlorophyllide a (Chlide). This reaction is light-independent. The NB-protein (ChlN-ChlB) is the catalytic component of the complex. This is Light-independent protochlorophyllide reductase subunit N from Prochlorococcus marinus (strain MIT 9211).